Here is a 139-residue protein sequence, read N- to C-terminus: Tetra-peptide repeat homeobox-like protein (139 aa).

Disordered stretches follow at residues 1 to 22 (MQDP…RQRQ) and 78 to 139 (ERWF…QQPQ). The homeobox DNA-binding region spans 20-79 (QRQDRTIYNWKQQEVLENHFKEEQYPDYDTRQELAEMLNLREYQVQVWFKNRRAKRSRER). Low complexity predominate over residues 82–139 (QKQLQQLQKHPQQQHPQQQHPQQQLQQQQPQQQPQQQQPQQQPQQQQPQQQQLHQQPQ).

This sequence belongs to the paired homeobox family.

The protein resides in the nucleus. In terms of biological role, transcription factor required for zygotic genome activation (ZGA), a critical event in early embryonic development during which the developmental control passes from maternally provided mRNAs to the expression of the zygotic genome after fertilization. Protein produced from maternal transcripts that binds and activates expression of key ZGA marker genes, such as NANOGNB, ZSCAN4, DUXB, KLF5 and DPPA3. Binds to regulatory DNA sequences containing a 5'-TAATCC-3' sequence motif. This is Tetra-peptide repeat homeobox-like protein from Homo sapiens (Human).